We begin with the raw amino-acid sequence, 258 residues long: Probable glycerol uptake facilitator protein (258 aa).

Helical transmembrane passes span 11-31 (WWFLAELIGTFILIIFGNGAV) and 50-70 (TVALTWGIGVLFGVLTANAIF). The short motif at 77–79 (NPA) is the NPA 1 element. 3 consecutive transmembrane segments (helical) span residues 95-115 (ALIWPGFVIGILAQFLGAMIA), 152-172 (FLTEFIATLILIGGVVAASHF), and 180-200 (VPPGFMGLWLVAGIIIAFGGA). The short motif at 206–208 (NPA) is the NPA 2 element. A helical membrane pass occupies residues 233–253 (WIPVIAPLSAGLVLSIIIGFS).

The protein belongs to the MIP/aquaporin (TC 1.A.8) family.

The protein resides in the cell membrane. The enzyme catalyses glycerol(in) = glycerol(out). Mediates glycerol diffusion across the cytoplasmic membrane via a pore-type mechanism. The polypeptide is Probable glycerol uptake facilitator protein (glpF) (Mycoplasma genitalium (strain ATCC 33530 / DSM 19775 / NCTC 10195 / G37) (Mycoplasmoides genitalium)).